The chain runs to 462 residues: O-methyltransferase CTB2 (462 aa).

D289 lines the S-adenosyl-L-methionine pocket. H340 acts as the Proton acceptor in catalysis.

The protein belongs to the class I-like SAM-binding methyltransferase superfamily. Cation-independent O-methyltransferase family. COMT subfamily.

It functions in the pathway mycotoxin biosynthesis. In terms of biological role, O-methyltransferase; part of the gene cluster that mediates the biosynthesis of cercosporin, a light-activated, non-host-selective toxin. The perylenequinone chromophore of cercosporin absorbs light energy to attain an electronically-activated triplet state and produces active oxygen species such as the hydroxyl radical, superoxide, hydrogen peroxide or singlet oxygen upon reaction with oxygen molecules. These reactive oxygen species cause damage to various cellular components including lipids, proteins and nucleic acids. The first step of cercosporin biosynthesis is performed by the polyketide synthase CTB1 which catalyzes the formation of nor-toralactone. The starter unit acyltransferase (SAT) domain of CTB1 initiates polyketide extension by the selective utilization of acetyl-CoA, which is elongated to the heptaketide in the beta-ketoacyl synthase (KS) domain by successive condensations with six malonyl units introduced by the malonyl acyltransferase (MAT) domain. The product template (PT) domain catalyzes C4-C9 and C2-C11 aldol cyclizations and dehydrations to a trihydroxynaphthalene, which is thought to be delivered to the thioesterase (TE) domain for product release. The bifunctional enzyme CTB3 then methylates nor-toralactone to toralactone before conducting an unusual oxidative aromatic ring opening. The O-methyltransferase CTB2 further methylates the nascent OH-6 of the CBT3 product, blocking further oxidation at this site before the reductase CTB6 reduces the 2-oxopropyl ketone at position C7, giving naphthalene. The FAD-dependent monooxygenase CTB5 in concert with the multicopper oxidase CTB12 are responsible for homodimerization of naphthalene with CTB7 installing the dioxepine moiety, finally producing cercosporin. The fasciclin domain-containing protein CTB11 might act with CTB5 and CTB12 whereas the roles of CTB9 and CTB10 have still to be elucidated. The protein is O-methyltransferase CTB2 of Cercospora beticola (Sugarbeet leaf spot fungus).